Reading from the N-terminus, the 167-residue chain is Lipoprotein signal peptidase (167 aa).

The next 2 membrane-spanning stretches (helical) occupy residues 67–87 (WILV…LWRA) and 91–111 (LVAL…IDRI). Active-site residues include aspartate 118 and aspartate 136. Residues 127 to 147 (FSWYVFNLADAAIVAGVALLI) form a helical membrane-spanning segment.

This sequence belongs to the peptidase A8 family.

The protein localises to the cell inner membrane. It carries out the reaction Release of signal peptides from bacterial membrane prolipoproteins. Hydrolyzes -Xaa-Yaa-Zaa-|-(S,diacylglyceryl)Cys-, in which Xaa is hydrophobic (preferably Leu), and Yaa (Ala or Ser) and Zaa (Gly or Ala) have small, neutral side chains.. The protein operates within protein modification; lipoprotein biosynthesis (signal peptide cleavage). In terms of biological role, this protein specifically catalyzes the removal of signal peptides from prolipoproteins. This chain is Lipoprotein signal peptidase, found in Beijerinckia indica subsp. indica (strain ATCC 9039 / DSM 1715 / NCIMB 8712).